A 407-amino-acid polypeptide reads, in one-letter code: tRNA-specific 2-thiouridylase MnmA (407 aa).

Residues 20-27 and Leu46 each bind ATP; that span reads AMSGGVDS. Cys114 functions as the Nucleophile in the catalytic mechanism. Cysteines 114 and 210 form a disulfide. Gly138 serves as a coordination point for ATP. The segment at 160 to 162 is interaction with tRNA; the sequence is RDQ. Cys210 (cysteine persulfide intermediate) is an active-site residue.

The protein belongs to the MnmA/TRMU family.

The protein resides in the cytoplasm. It catalyses the reaction S-sulfanyl-L-cysteinyl-[protein] + uridine(34) in tRNA + AH2 + ATP = 2-thiouridine(34) in tRNA + L-cysteinyl-[protein] + A + AMP + diphosphate + H(+). Its function is as follows. Catalyzes the 2-thiolation of uridine at the wobble position (U34) of tRNA, leading to the formation of s(2)U34. This chain is tRNA-specific 2-thiouridylase MnmA, found in Bartonella tribocorum (strain CIP 105476 / IBS 506).